The primary structure comprises 271 residues: Chymotrypsin-like elastase family member 2A (271 aa).

An N-terminal signal peptide occupies residues 1 to 16; that stretch reads MIRTLLLSALVAGALS. Positions 17-30 are cleaved as a propeptide — activation peptide; that stretch reads CGYPTYEVQHDVSR. The Peptidase S1 domain occupies 31-269; sequence VVGGQEASPN…YIDWINSVIA (239 aa). Cysteine 60 and cysteine 76 are joined by a disulfide. Active-site charge relay system residues include histidine 75 and aspartate 123. 3 disulfides stabilise this stretch: cysteine 157–cysteine 224, cysteine 188–cysteine 204, and cysteine 214–cysteine 245. Serine 218 (charge relay system) is an active-site residue.

This sequence belongs to the peptidase S1 family. Elastase subfamily. Interacts with CPA1. Interacts with SERPINA1. In terms of tissue distribution, pancreas.

It localises to the secreted. The enzyme catalyses Preferential cleavage: Leu-|-Xaa, Met-|-Xaa and Phe-|-Xaa. Hydrolyzes elastin.. In terms of biological role, elastase that enhances insulin signaling and might have a physiologic role in cellular glucose metabolism. Circulates in plasma and reduces platelet hyperactivation, triggers both insulin secretion and degradation, and increases insulin sensitivity. The chain is Chymotrypsin-like elastase family member 2A (Cela2a) from Rattus norvegicus (Rat).